A 189-amino-acid chain; its full sequence is Interferon alpha-1/13 (189 aa).

The first 23 residues, 1-23 (MASPFALLMVLVVLSCKSSCSLG), serve as a signal peptide directing secretion. Cystine bridges form between Cys24/Cys122 and Cys52/Cys162.

The protein belongs to the alpha/beta interferon family. Interacts with CR2.

The protein resides in the secreted. Produced by macrophages, IFN-alpha have antiviral activities. Interferon stimulates the production of two enzymes: a protein kinase and an oligoadenylate synthetase. The protein is Interferon alpha-1/13 (IFNA1) of Homo sapiens (Human).